An 83-amino-acid chain; its full sequence is Protein ShK-like4 (83 aa).

The signal sequence occupies residues 1–21 (MDTRVIAVLFVAIMVLSSTNA). The propeptide occupies 22 to 48 (LPKQKGSYKNMNHADFLKGLDRASSKR). 3 cysteine pairs are disulfide-bonded: Cys-50–Cys-82, Cys-57–Cys-75, and Cys-67–Cys-79. Residues 50–83 (CRDSHWSCFFQSNYEDICSTAQAEECALSCGLCE) enclose the ShKT domain.

Contains 3 disulfide bonds. In terms of tissue distribution, expressed in various neurons (ectodermal sensory cells) (in planulae and primary polyps). Not expressed in nematocytes.

Functionally, probable neuropeptide. This chain is Protein ShK-like4, found in Nematostella vectensis (Starlet sea anemone).